The sequence spans 369 residues: tRNA/tmRNA (uracil-C(5))-methyltransferase (369 aa).

S-adenosyl-L-methionine-binding residues include Gln193, Tyr221, Asn226, Glu242, and Asp302. Cys327 functions as the Nucleophile in the catalytic mechanism. Glu361 functions as the Proton acceptor in the catalytic mechanism.

This sequence belongs to the class I-like SAM-binding methyltransferase superfamily. RNA M5U methyltransferase family. TrmA subfamily.

It carries out the reaction uridine(54) in tRNA + S-adenosyl-L-methionine = 5-methyluridine(54) in tRNA + S-adenosyl-L-homocysteine + H(+). The catalysed reaction is uridine(341) in tmRNA + S-adenosyl-L-methionine = 5-methyluridine(341) in tmRNA + S-adenosyl-L-homocysteine + H(+). Functionally, dual-specificity methyltransferase that catalyzes the formation of 5-methyluridine at position 54 (m5U54) in all tRNAs, and that of position 341 (m5U341) in tmRNA (transfer-mRNA). The chain is tRNA/tmRNA (uracil-C(5))-methyltransferase from Sulfurimonas denitrificans (strain ATCC 33889 / DSM 1251) (Thiomicrospira denitrificans (strain ATCC 33889 / DSM 1251)).